Here is a 157-residue protein sequence, read N- to C-terminus: 6,7-dimethyl-8-ribityllumazine synthase (157 aa).

Residues phenylalanine 22, 56–58, and 80–82 each bind 5-amino-6-(D-ribitylamino)uracil; these read AME and AVV. 85 to 86 is a (2S)-2-hydroxy-3-oxobutyl phosphate binding site; the sequence is ET. Catalysis depends on histidine 88, which acts as the Proton donor. Position 113 (phenylalanine 113) interacts with 5-amino-6-(D-ribitylamino)uracil. A (2S)-2-hydroxy-3-oxobutyl phosphate-binding site is contributed by arginine 127.

It belongs to the DMRL synthase family.

It catalyses the reaction (2S)-2-hydroxy-3-oxobutyl phosphate + 5-amino-6-(D-ribitylamino)uracil = 6,7-dimethyl-8-(1-D-ribityl)lumazine + phosphate + 2 H2O + H(+). Its pathway is cofactor biosynthesis; riboflavin biosynthesis; riboflavin from 2-hydroxy-3-oxobutyl phosphate and 5-amino-6-(D-ribitylamino)uracil: step 1/2. In terms of biological role, catalyzes the formation of 6,7-dimethyl-8-ribityllumazine by condensation of 5-amino-6-(D-ribitylamino)uracil with 3,4-dihydroxy-2-butanone 4-phosphate. This is the penultimate step in the biosynthesis of riboflavin. This is 6,7-dimethyl-8-ribityllumazine synthase from Levilactobacillus brevis (strain ATCC 367 / BCRC 12310 / CIP 105137 / JCM 1170 / LMG 11437 / NCIMB 947 / NCTC 947) (Lactobacillus brevis).